The sequence spans 414 residues: Signal recognition particle receptor FtsY (414 aa).

GTP-binding positions include 216–223, 298–302, and 362–365; these read GVNGVGKT, DTAGR, and TKLD.

This sequence belongs to the GTP-binding SRP family. FtsY subfamily. Part of the signal recognition particle protein translocation system, which is composed of SRP and FtsY. SRP is a ribonucleoprotein composed of Ffh and a 4.5S RNA molecule.

It localises to the cell inner membrane. The protein resides in the cytoplasm. The catalysed reaction is GTP + H2O = GDP + phosphate + H(+). Involved in targeting and insertion of nascent membrane proteins into the cytoplasmic membrane. Acts as a receptor for the complex formed by the signal recognition particle (SRP) and the ribosome-nascent chain (RNC). Interaction with SRP-RNC leads to the transfer of the RNC complex to the Sec translocase for insertion into the membrane, the hydrolysis of GTP by both Ffh and FtsY, and the dissociation of the SRP-FtsY complex into the individual components. This is Signal recognition particle receptor FtsY from Haemophilus influenzae (strain ATCC 51907 / DSM 11121 / KW20 / Rd).